Consider the following 367-residue polypeptide: Trans-enoyl reductase opdC (367 aa).

NADP(+)-binding positions include 47–50 (YDAK), 199–202 (SPHN), Tyr217, 264–265 (LD), and 353–354 (IT).

It belongs to the zinc-containing alcohol dehydrogenase family. Monomer.

It participates in secondary metabolite biosynthesis. Trans-enoyl reductase; part of the gene cluster that mediates the biosynthesis of oxopyrrolidines, polyketide-amino acid hybrid compounds with feature structures of tetramic acid. The polyketide chain is first assembled by the highly reducing PKS module of opdA using acetyl-CoA as the starter unit and five malonyl-CoA as the extender units. OpdC acts as a trans-acting enoyl reductase and reduces the terminal alkenyl to alkane. The 17R in oxopyrrolidine A and 15R, 17S in oxopyrrolidine B are generated by non-stereospecific catalysis of the ketoreductase (KR) domain and enoyl reductases. Then the polyketides with specific configurations are transferred to the NRPS module of opdA and linked to L-tyrosine to form an amide bond. Finally, the oxopyrrolidines are offloaded through a Dieckmann cyclization catalyzed by the terminal D domain to give a tetramic acid moiety. This chain is Trans-enoyl reductase opdC, found in Penicillium oxalicum (strain 114-2 / CGMCC 5302) (Penicillium decumbens).